Reading from the N-terminus, the 431-residue chain is Mannan endo-1,4-beta-mannosidase 5 (431 aa).

A signal peptide spans 1–24 (MVPTRNRPMLRILGFFICAAFIYL). An N-linked (GlcNAc...) asparagine glycan is attached at N45. W97 provides a ligand contact to substrate. Residue N168 is glycosylated (N-linked (GlcNAc...) asparagine). N213 is a substrate binding site. The Proton donor role is filled by E214. A glycan (N-linked (GlcNAc...) asparagine) is linked at N282. Residue Y294 participates in substrate binding. An N-linked (GlcNAc...) asparagine glycan is attached at N301. The active-site Nucleophile is E334. Residue W376 coordinates substrate.

This sequence belongs to the glycosyl hydrolase 5 (cellulase A) family. In terms of tissue distribution, expressed in stems.

The protein resides in the secreted. The catalysed reaction is Random hydrolysis of (1-&gt;4)-beta-D-mannosidic linkages in mannans, galactomannans and glucomannans.. The chain is Mannan endo-1,4-beta-mannosidase 5 (MAN5) from Arabidopsis thaliana (Mouse-ear cress).